A 144-amino-acid polypeptide reads, in one-letter code: Large-conductance mechanosensitive channel (144 aa).

Transmembrane regions (helical) follow at residues 16-36 (VIDLAVGVIIGAAFGKIVDSV) and 86-106 (GNFLTIVVNFVILAFIIFLMV).

This sequence belongs to the MscL family. Homopentamer.

Its subcellular location is the cell inner membrane. Functionally, channel that opens in response to stretch forces in the membrane lipid bilayer. May participate in the regulation of osmotic pressure changes within the cell. In Cupriavidus pinatubonensis (strain JMP 134 / LMG 1197) (Cupriavidus necator (strain JMP 134)), this protein is Large-conductance mechanosensitive channel.